The following is a 330-amino-acid chain: uncharacterized protein (330 aa).

The chain crosses the membrane as a helical span at residues 2 to 22 (IKPIYLIIIGTVICLVILYYF). Residues Asn72, Asn94, Asn234, and Asn315 are each glycosylated (N-linked (GlcNAc...) asparagine; by host).

It is found in the membrane. This is an uncharacterized protein from Acanthamoeba polyphaga mimivirus (APMV).